The chain runs to 433 residues: Phosphomethylpyrimidine synthase (433 aa).

Residues asparagine 69, methionine 98, tyrosine 127, histidine 163, 185 to 187, 226 to 229, and glutamate 265 each bind substrate; these read SRG and DALR. Histidine 269 serves as a coordination point for Zn(2+). Position 292 (tyrosine 292) interacts with substrate. Histidine 333 provides a ligand contact to Zn(2+). The [4Fe-4S] cluster site is built by cysteine 409, cysteine 412, and cysteine 416.

It belongs to the ThiC family. It depends on [4Fe-4S] cluster as a cofactor.

The enzyme catalyses 5-amino-1-(5-phospho-beta-D-ribosyl)imidazole + S-adenosyl-L-methionine = 4-amino-2-methyl-5-(phosphooxymethyl)pyrimidine + CO + 5'-deoxyadenosine + formate + L-methionine + 3 H(+). It functions in the pathway cofactor biosynthesis; thiamine diphosphate biosynthesis. Catalyzes the synthesis of the hydroxymethylpyrimidine phosphate (HMP-P) moiety of thiamine from aminoimidazole ribotide (AIR) in a radical S-adenosyl-L-methionine (SAM)-dependent reaction. This Finegoldia magna (strain ATCC 29328 / DSM 20472 / WAL 2508) (Peptostreptococcus magnus) protein is Phosphomethylpyrimidine synthase.